Reading from the N-terminus, the 244-residue chain is 1-(5-phosphoribosyl)-5-[(5-phosphoribosylamino)methylideneamino] imidazole-4-carboxamide isomerase (244 aa).

Catalysis depends on Asp8, which acts as the Proton acceptor. Asp130 serves as the catalytic Proton donor.

Belongs to the HisA/HisF family.

The protein localises to the cytoplasm. It catalyses the reaction 1-(5-phospho-beta-D-ribosyl)-5-[(5-phospho-beta-D-ribosylamino)methylideneamino]imidazole-4-carboxamide = 5-[(5-phospho-1-deoxy-D-ribulos-1-ylimino)methylamino]-1-(5-phospho-beta-D-ribosyl)imidazole-4-carboxamide. It participates in amino-acid biosynthesis; L-histidine biosynthesis; L-histidine from 5-phospho-alpha-D-ribose 1-diphosphate: step 4/9. This is 1-(5-phosphoribosyl)-5-[(5-phosphoribosylamino)methylideneamino] imidazole-4-carboxamide isomerase from Hahella chejuensis (strain KCTC 2396).